Reading from the N-terminus, the 193-residue chain is Pyridoxal 5'-phosphate synthase subunit PdxT (193 aa).

Position 48 to 50 (glycine 48 to serine 50) interacts with L-glutamine. Cysteine 80 serves as the catalytic Nucleophile. Residues arginine 107 and isoleucine 136 to arginine 137 contribute to the L-glutamine site. Catalysis depends on charge relay system residues histidine 172 and glutamate 174.

This sequence belongs to the glutaminase PdxT/SNO family. In terms of assembly, in the presence of PdxS, forms a dodecamer of heterodimers. Only shows activity in the heterodimer.

The enzyme catalyses aldehydo-D-ribose 5-phosphate + D-glyceraldehyde 3-phosphate + L-glutamine = pyridoxal 5'-phosphate + L-glutamate + phosphate + 3 H2O + H(+). The catalysed reaction is L-glutamine + H2O = L-glutamate + NH4(+). It functions in the pathway cofactor biosynthesis; pyridoxal 5'-phosphate biosynthesis. Functionally, catalyzes the hydrolysis of glutamine to glutamate and ammonia as part of the biosynthesis of pyridoxal 5'-phosphate. The resulting ammonia molecule is channeled to the active site of PdxS. The sequence is that of Pyridoxal 5'-phosphate synthase subunit PdxT from Clostridium botulinum (strain Loch Maree / Type A3).